Reading from the N-terminus, the 414-residue chain is Serine hydroxymethyltransferase (414 aa).

(6S)-5,6,7,8-tetrahydrofolate-binding positions include L121 and 125–127 (GHL). Residue K229 is modified to N6-(pyridoxal phosphate)lysine.

Belongs to the SHMT family. As to quaternary structure, homodimer. Pyridoxal 5'-phosphate serves as cofactor.

It is found in the cytoplasm. It carries out the reaction (6R)-5,10-methylene-5,6,7,8-tetrahydrofolate + glycine + H2O = (6S)-5,6,7,8-tetrahydrofolate + L-serine. The protein operates within one-carbon metabolism; tetrahydrofolate interconversion. It functions in the pathway amino-acid biosynthesis; glycine biosynthesis; glycine from L-serine: step 1/1. Catalyzes the reversible interconversion of serine and glycine with tetrahydrofolate (THF) serving as the one-carbon carrier. This reaction serves as the major source of one-carbon groups required for the biosynthesis of purines, thymidylate, methionine, and other important biomolecules. Also exhibits THF-independent aldolase activity toward beta-hydroxyamino acids, producing glycine and aldehydes, via a retro-aldol mechanism. The sequence is that of Serine hydroxymethyltransferase from Thiobacillus denitrificans (strain ATCC 25259 / T1).